A 231-amino-acid polypeptide reads, in one-letter code: 2,3-bisphosphoglycerate-dependent phosphoglycerate mutase (231 aa).

Substrate contacts are provided by residues 8–15 (RHGESEWN), 21–22 (TG), Arg60, 87–90 (ERHY), Lys98, 114–115 (RR), and 183–184 (GN). Catalysis depends on His9, which acts as the Tele-phosphohistidine intermediate. The Proton donor/acceptor role is filled by Glu87.

It belongs to the phosphoglycerate mutase family. BPG-dependent PGAM subfamily.

The enzyme catalyses (2R)-2-phosphoglycerate = (2R)-3-phosphoglycerate. It functions in the pathway carbohydrate degradation; glycolysis; pyruvate from D-glyceraldehyde 3-phosphate: step 3/5. In terms of biological role, catalyzes the interconversion of 2-phosphoglycerate and 3-phosphoglycerate. The sequence is that of 2,3-bisphosphoglycerate-dependent phosphoglycerate mutase from Streptococcus pyogenes serotype M49 (strain NZ131).